A 372-amino-acid polypeptide reads, in one-letter code: Rab9 effector protein with kelch motifs (372 aa).

Kelch repeat units lie at residues 49–95, 100–146, 151–200, 204–250, and 254–303; these read KVFI…FIPS, RIWV…TSSA, QLYV…VMVA, KLFI…SAVA, and HVYI…IIPW. Ser-133 carries the phosphoserine modification. Residues 314-340 are disordered; it reads SNSLTLNHEAEKEDSADKVMSHSGDSH. The span at 321–340 shows a compositional bias: basic and acidic residues; the sequence is HEAEKEDSADKVMSHSGDSH.

As to quaternary structure, interacts with PIKFYVE; the interaction recruits RABEPK to the endosomal membrane. Interacts with RAB9 in its GTP-bound conformation. In terms of processing, phosphorylated on Ser residues by PIKFYVE.

It localises to the cytoplasm. The protein localises to the endosome membrane. Functionally, rab9 effector required for endosome to trans-Golgi network (TGN) transport. The polypeptide is Rab9 effector protein with kelch motifs (Homo sapiens (Human)).